The sequence spans 298 residues: Aspartate carbamoyltransferase catalytic subunit (298 aa).

Residues Arg54 and Thr55 each coordinate carbamoyl phosphate. Residue Lys82 coordinates L-aspartate. Arg104, His132, and Gln135 together coordinate carbamoyl phosphate. Residues Arg165 and Arg218 each coordinate L-aspartate. The carbamoyl phosphate site is built by Gly260 and Pro261.

This sequence belongs to the aspartate/ornithine carbamoyltransferase superfamily. ATCase family. As to quaternary structure, heterododecamer (2C3:3R2) of six catalytic PyrB chains organized as two trimers (C3), and six regulatory PyrI chains organized as three dimers (R2).

It catalyses the reaction carbamoyl phosphate + L-aspartate = N-carbamoyl-L-aspartate + phosphate + H(+). It participates in pyrimidine metabolism; UMP biosynthesis via de novo pathway; (S)-dihydroorotate from bicarbonate: step 2/3. Functionally, catalyzes the condensation of carbamoyl phosphate and aspartate to form carbamoyl aspartate and inorganic phosphate, the committed step in the de novo pyrimidine nucleotide biosynthesis pathway. The sequence is that of Aspartate carbamoyltransferase catalytic subunit from Wolbachia sp. subsp. Brugia malayi (strain TRS).